A 158-amino-acid polypeptide reads, in one-letter code: 3-dehydroquinate dehydratase (158 aa).

The active-site Proton acceptor is Tyr24. Asn75, His81, and Asp88 together coordinate substrate. Residue His101 is the Proton donor of the active site. Residues Leu102–Ser103 and Arg112 each bind substrate.

This sequence belongs to the type-II 3-dehydroquinase family. As to quaternary structure, homododecamer.

It catalyses the reaction 3-dehydroquinate = 3-dehydroshikimate + H2O. The protein operates within metabolic intermediate biosynthesis; chorismate biosynthesis; chorismate from D-erythrose 4-phosphate and phosphoenolpyruvate: step 3/7. Catalyzes a trans-dehydration via an enolate intermediate. In Bartonella bacilliformis (strain ATCC 35685 / KC583 / Herrer 020/F12,63), this protein is 3-dehydroquinate dehydratase.